Consider the following 395-residue polypeptide: Elongation factor Tu (395 aa).

One can recognise a tr-type G domain in the interval K10–Q204. The tract at residues G19–T26 is G1. Position 19 to 26 (G19 to T26) interacts with GTP. T26 contributes to the Mg(2+) binding site. A G2 region spans residues G60–N64. The G3 stretch occupies residues D81 to G84. GTP is bound by residues D81–H85 and N136–D139. A G4 region spans residues N136 to D139. Positions S174–L176 are G5.

The protein belongs to the TRAFAC class translation factor GTPase superfamily. Classic translation factor GTPase family. EF-Tu/EF-1A subfamily. As to quaternary structure, monomer.

The protein localises to the cytoplasm. The enzyme catalyses GTP + H2O = GDP + phosphate + H(+). In terms of biological role, GTP hydrolase that promotes the GTP-dependent binding of aminoacyl-tRNA to the A-site of ribosomes during protein biosynthesis. The polypeptide is Elongation factor Tu (Ligilactobacillus salivarius (strain UCC118) (Lactobacillus salivarius)).